Reading from the N-terminus, the 135-residue chain is Ribonuclease P protein component 2 (135 aa).

It belongs to the eukaryotic/archaeal RNase P protein component 2 family. As to quaternary structure, consists of a catalytic RNA component and at least 4-5 protein subunits.

Its subcellular location is the cytoplasm. The enzyme catalyses Endonucleolytic cleavage of RNA, removing 5'-extranucleotides from tRNA precursor.. Part of ribonuclease P, a protein complex that generates mature tRNA molecules by cleaving their 5'-ends. The protein is Ribonuclease P protein component 2 of Methanococcus aeolicus (strain ATCC BAA-1280 / DSM 17508 / OCM 812 / Nankai-3).